A 367-amino-acid polypeptide reads, in one-letter code: Ferredoxin--NADP reductase 2 (367 aa).

Residues D56, Q64, Y69, V109, F144, D309, and T350 each contribute to the FAD site.

It belongs to the ferredoxin--NADP reductase type 2 family. Homodimer. FAD serves as cofactor.

The catalysed reaction is 2 reduced [2Fe-2S]-[ferredoxin] + NADP(+) + H(+) = 2 oxidized [2Fe-2S]-[ferredoxin] + NADPH. This chain is Ferredoxin--NADP reductase 2, found in Cupriavidus metallidurans (strain ATCC 43123 / DSM 2839 / NBRC 102507 / CH34) (Ralstonia metallidurans).